A 260-amino-acid chain; its full sequence is UPF0246 protein Bamb_2261 (260 aa).

This sequence belongs to the UPF0246 family.

The protein is UPF0246 protein Bamb_2261 of Burkholderia ambifaria (strain ATCC BAA-244 / DSM 16087 / CCUG 44356 / LMG 19182 / AMMD) (Burkholderia cepacia (strain AMMD)).